A 1058-amino-acid chain; its full sequence is SMC5-SMC6 complex localization factor protein 1 (1058 aa).

2 consecutive BRCT domains span residues 12–77 (MTGF…IHSA) and 119–196 (GAPG…GDFL). The interval 410–1058 (PRGVLNLIES…MMCRSVMEFS (649 aa)) is NSE5-like domain; mediates interaction with SLF2. 3 ANK repeats span residues 806 to 836 (KGET…DINV), 840 to 869 (AGWT…EVDL), and 874 to 903 (DGVT…PVLL). K931 is covalently cross-linked (Glycyl lysine isopeptide (Lys-Gly) (interchain with G-Cter in SUMO2)).

As to quaternary structure, interacts (via N-terminus) with SLF2; this interaction links RAD18 to the SMC5-SMC6 complex. Interacts (via BRCT domains) with RAD18; this interaction occurs in a SLF2-independent manner. Interacts with SMC6. Interacts (via BRCT domains) with RAD18 (via C-terminus and phosphorylated form); this interaction is required for efficient repair of UV-induced DNA damage.

The protein resides in the nucleus. It is found in the cytoplasm. Its subcellular location is the cytoskeleton. The protein localises to the microtubule organizing center. It localises to the centrosome. Its function is as follows. Plays a role in the DNA damage response (DDR) pathway by regulating postreplication repair of UV-damaged DNA and genomic stability maintenance. The SLF1-SLF2 complex acts to link RAD18 with the SMC5-SMC6 complex at replication-coupled interstrand cross-links (ICL) and DNA double-strand breaks (DSBs) sites on chromatin during DNA repair in response to stalled replication forks. Promotes the recruitment of SLF2 and the SMC5-SMC6 complex to DNA lesions. This chain is SMC5-SMC6 complex localization factor protein 1, found in Homo sapiens (Human).